The primary structure comprises 368 residues: POU domain, class 3, transcription factor 1 (368 aa).

Residues 1–16 show a composition bias toward polar residues; that stretch reads MATTAQYIPRNNSLPS. Disordered stretches follow at residues 1-28, 69-88, 100-134, and 147-193; these read MATTAQYIPRNNSLPSNPLMHPDSDRMH, TDWTSGTHIGQAEHNKASVQ, SHLVHQPTQNSHHGSWAPTTTHHLSPLSPASNGHQ, and SPQP…PSSD. The span at 79-88 shows a compositional bias: basic and acidic residues; it reads QAEHNKASVQ. A compositionally biased stretch (polar residues) spans 105 to 134; the sequence is QPTQNSHHGSWAPTTTHHLSPLSPASNGHQ. Basic and acidic residues predominate over residues 155–170; it reads GLRDPLHDDAGSHDNQ. The 75-residue stretch at 187-261 folds into the POU-specific domain; it reads EDAPSSDDLE…LLNKWLEETD (75 aa). Residues 279–338 constitute a DNA-binding region (homeobox); the sequence is KRKKRTSIEVGVKGALENHFLKCPKPSAHEITTLAGTLQLEKEVVRVWFCNRRQKEKRMT.

The protein belongs to the POU transcription factor family. Class-3 subfamily. As to expression, predominantly expressed in the embryonic and adult central nervous system.

The protein localises to the nucleus. Transcription factor that may play important roles in patterning the embryonic brain. Could directly respond to the reception of the sonic hedgehog (shh) signal. The sequence is that of POU domain, class 3, transcription factor 1 (pou3f1) from Danio rerio (Zebrafish).